The following is a 531-amino-acid chain: Cytochrome P450 monooxygenase acuC (531 aa).

Residues 3–23 (PIVWLLGGAIALLVVVIRAAW) traverse the membrane as a helical segment. Cys447 provides a ligand contact to heme.

The protein belongs to the cytochrome P450 family. It depends on heme as a cofactor.

The protein localises to the endoplasmic reticulum membrane. It catalyses the reaction 3-methylphenol + reduced [NADPH--hemoprotein reductase] + O2 = 3-hydroxybenzyl alcohol + oxidized [NADPH--hemoprotein reductase] + H2O + H(+). The protein operates within secondary metabolite biosynthesis. Its function is as follows. Cytochrome P450 monooxygenase; part of the gene cluster that mediates the biosynthesis of aculins. The pathway begins with the synthesis of 6-methylsalicylic acid by the polyketide synthase (PKS) acuA via condensation of acetate and malonate units. The 6-methylsalicylic acid decarboxylase acuB then catalyzes the decarboxylation of 6-methylsalicylic acid to yield m-cresol (also known as 3-methylphenol). These first reactions occur in the cytosol. The intermediate m-cresol is then transported into the endoplasmic reticulum where the cytochrome P450 monooxygenase acuC converts it to m-hydroxybenzyl alcohol, which is further converted to gentisyl alcohol by the cytochrome P450 monooxygenase acuD. Gentisyl alcohol is further oxidized by the oxidoreductase acuE that probably catalyzes hydroxylation of the aromatic ring. The aromatic system might then be opened by oxidation through a Baeyer-Villiger type of oxidation, which could be catalyzed by acuF, with the carboxylic acid at C-1 subsequently reduced to an aldehyde by acuG. Subsequently, a hemiacetal is formed, before the dehydrogenase acuH would reduce the double bond between C-4 and C-6. Finally, keto-enol tautomerism results in formation of aculinic acid, which exists as two diastereomers (both R/S configurations at C-1) by non-enzymatic hemiacetal formation. The carboxypeptidase acuI could be involved in the linking of aculinic acid to an aculene A moiety produced by the aculene biosynthesis cluster and which leads to the production of aculin A. AcuI may also be involved in the attachment of proline to aculinic acid to form epi-aculins A and B. The chain is Cytochrome P450 monooxygenase acuC from Aspergillus aculeatus (strain ATCC 16872 / CBS 172.66 / WB 5094).